An 84-amino-acid polypeptide reads, in one-letter code: Small ribosomal subunit protein uS17 (84 aa).

It belongs to the universal ribosomal protein uS17 family. As to quaternary structure, part of the 30S ribosomal subunit.

Its function is as follows. One of the primary rRNA binding proteins, it binds specifically to the 5'-end of 16S ribosomal RNA. This Moorella thermoacetica (strain ATCC 39073 / JCM 9320) protein is Small ribosomal subunit protein uS17.